The sequence spans 75 residues: Small ribosomal subunit protein bS18 (75 aa).

It belongs to the bacterial ribosomal protein bS18 family. In terms of assembly, part of the 30S ribosomal subunit. Forms a tight heterodimer with protein bS6.

In terms of biological role, binds as a heterodimer with protein bS6 to the central domain of the 16S rRNA, where it helps stabilize the platform of the 30S subunit. This chain is Small ribosomal subunit protein bS18, found in Pectobacterium atrosepticum (strain SCRI 1043 / ATCC BAA-672) (Erwinia carotovora subsp. atroseptica).